The chain runs to 359 residues: Protein RecA (359 aa).

64–71 (GHESSGKT) contributes to the ATP binding site. The tract at residues 328 to 359 (NKYPNKDSNDSPKEGSKIKTKVNPAVTQDELI) is disordered. Basic and acidic residues predominate over residues 331 to 344 (PNKDSNDSPKEGSK).

It belongs to the RecA family.

It is found in the cytoplasm. In terms of biological role, can catalyze the hydrolysis of ATP in the presence of single-stranded DNA, the ATP-dependent uptake of single-stranded DNA by duplex DNA, and the ATP-dependent hybridization of homologous single-stranded DNAs. It interacts with LexA causing its activation and leading to its autocatalytic cleavage. This Francisella tularensis subsp. novicida (strain U112) protein is Protein RecA.